A 583-amino-acid chain; its full sequence is NudC domain-containing protein 1 (583 aa).

Residue S8 is modified to Phosphoserine. The CS domain occupies 273–361; that stretch reads IKEPLYYWQQ…NEGLTWPELV (89 aa). S388 is subject to Phosphoserine.

In terms of tissue distribution, isoform 1 is specifically expressed in leukemias and a variety of solid tumor cell lines and is also detected in testis and heart. Isoform 2 is predominantly expressed in testis and weakly expressed in tumor cells.

The protein resides in the cytoplasm. It is found in the nucleus. The polypeptide is NudC domain-containing protein 1 (Homo sapiens (Human)).